A 389-amino-acid chain; its full sequence is Succinyl-diaminopimelate desuccinylase (389 aa).

His-72 is a binding site for Zn(2+). Residue Asp-74 is part of the active site. Residue Asp-105 participates in Zn(2+) binding. Glu-144 serves as the catalytic Proton acceptor. Zn(2+) is bound by residues Glu-145, Glu-173, and His-362.

The protein belongs to the peptidase M20A family. DapE subfamily. As to quaternary structure, homodimer. The cofactor is Zn(2+). Co(2+) serves as cofactor.

The catalysed reaction is N-succinyl-(2S,6S)-2,6-diaminopimelate + H2O = (2S,6S)-2,6-diaminopimelate + succinate. The protein operates within amino-acid biosynthesis; L-lysine biosynthesis via DAP pathway; LL-2,6-diaminopimelate from (S)-tetrahydrodipicolinate (succinylase route): step 3/3. Functionally, catalyzes the hydrolysis of N-succinyl-L,L-diaminopimelic acid (SDAP), forming succinate and LL-2,6-diaminopimelate (DAP), an intermediate involved in the bacterial biosynthesis of lysine and meso-diaminopimelic acid, an essential component of bacterial cell walls. The sequence is that of Succinyl-diaminopimelate desuccinylase from Nitrobacter hamburgensis (strain DSM 10229 / NCIMB 13809 / X14).